Consider the following 24-residue polypeptide: Major pollen allergen Ole e 4 (24 aa).

It belongs to the glycosyl hydrolase 17 family. The N-terminus is blocked.

The chain is Major pollen allergen Ole e 4 from Olea europaea (Common olive).